The primary structure comprises 87 residues: Cell division topological specificity factor (87 aa).

The protein belongs to the MinE family.

Its function is as follows. Prevents the cell division inhibition by proteins MinC and MinD at internal division sites while permitting inhibition at polar sites. This ensures cell division at the proper site by restricting the formation of a division septum at the midpoint of the long axis of the cell. This Neisseria meningitidis serogroup C (strain 053442) protein is Cell division topological specificity factor.